Consider the following 1234-residue polypeptide: DNA-directed RNA polymerase subunit beta (1234 aa).

A disordered region spans residues 1189 to 1212 (VLSSQDNDYEEPEENDEEDELNLD). Residues 1195–1212 (NDYEEPEENDEEDELNLD) show a composition bias toward acidic residues.

The protein belongs to the RNA polymerase beta chain family. The RNAP catalytic core consists of 2 alpha, 1 beta, 1 beta' and 1 omega subunit. When a sigma factor is associated with the core the holoenzyme is formed, which can initiate transcription.

The enzyme catalyses RNA(n) + a ribonucleoside 5'-triphosphate = RNA(n+1) + diphosphate. In terms of biological role, DNA-dependent RNA polymerase catalyzes the transcription of DNA into RNA using the four ribonucleoside triphosphates as substrates. This is DNA-directed RNA polymerase subunit beta from Clostridium kluyveri (strain NBRC 12016).